The chain runs to 385 residues: UPF0284 protein P9301_04631 (385 aa).

The protein belongs to the UPF0284 family.

In Prochlorococcus marinus (strain MIT 9301), this protein is UPF0284 protein P9301_04631.